The sequence spans 586 residues: Putative butyrophilin subfamily 2 member A3 (586 aa).

The signal sequence occupies residues 1 to 27 (MEPAAALHFSRPASLLLLLSLCALVSA). Positions 28–139 (QVTVVGPTDP…SCNEAILHLV (112 aa)) constitute an Ig-like V-type domain. Topologically, residues 28-246 (QVTVVGPTDP…SFMPSRSPCV (219 aa)) are extracellular. Residues asparagine 45, asparagine 112, asparagine 214, and asparagine 220 are each glycosylated (N-linked (GlcNAc...) asparagine). An intrachain disulfide couples cysteine 50 to cysteine 123. The chain crosses the membrane as a helical span at residues 247-267 (VILPVIMIILMIPIAICIYWI). Residues 268-586 (NNLQKEKKDS…VPQLPARKKV (319 aa)) are Cytoplasmic-facing. One can recognise a B30.2/SPRY domain in the interval 281–474 (TFNLCLSLAG…ILICSAFTGA (194 aa)).

This sequence belongs to the immunoglobulin superfamily. BTN/MOG family.

The protein localises to the membrane. This Homo sapiens (Human) protein is Putative butyrophilin subfamily 2 member A3 (BTN2A3P).